The following is a 100-amino-acid chain: Noncompact myelin-associated protein (100 aa).

Topologically, residues 1–28 (MTTATTLGDAVFSLNMTRGEDILYKSSG) are extracellular. The helical transmembrane segment at 29 to 49 (AIVAAIVVVVVIIVTLVLILL) threads the bilayer. Over 50–100 (KMYNRRMRTRRELEPKSPKPPVPPALDPNSNGSQQPAAVTSDPADVPVETR) the chain is Cytoplasmic. The interval 58-100 (TRRELEPKSPKPPVPPALDPNSNGSQQPAAVTSDPADVPVETR) is disordered. A compositionally biased stretch (polar residues) spans 77–87 (PNSNGSQQPAA).

Post-translationally, glycosylated. Expressed in the peripheral nervous system Schwann cells (at protein level).

Its subcellular location is the cell membrane. Functionally, plays a role in myelin formation. The protein is Noncompact myelin-associated protein (Ncmap) of Rattus norvegicus (Rat).